The chain runs to 508 residues: Acetyl-coenzyme A carboxylase carboxyl transferase subunit beta, chloroplastic (508 aa).

Disordered regions lie at residues 30-51 and 173-234; these read PIEN…NIQG and NSSN…SSTH. Basic and acidic residues predominate over residues 35 to 47; the sequence is SESKDPNRNDTDK. A compositionally biased stretch (low complexity) spans 173 to 219; that stretch reads NSSNNNSSNENSSNENSSNENSSNENSSNDYISSSISSQSENSSQNE. Over residues 220–234 the composition is skewed to polar residues; the sequence is DITTSDQTIPESSTH. The CoA carboxyltransferase N-terminal domain occupies 244–508; that stretch reads LWVQCENCYG…LHTFFPLNQN (265 aa). Zn(2+) is bound by residues Cys-248, Cys-251, Cys-267, and Cys-270. The C4-type zinc-finger motif lies at 248-270; it reads CENCYGLNYKKFFKSKMHLCEQC.

The protein belongs to the AccD/PCCB family. As to quaternary structure, acetyl-CoA carboxylase is a heterohexamer composed of biotin carboxyl carrier protein, biotin carboxylase and 2 subunits each of ACCase subunit alpha and ACCase plastid-coded subunit beta (accD). It depends on Zn(2+) as a cofactor.

It localises to the plastid. The protein resides in the chloroplast stroma. The enzyme catalyses N(6)-carboxybiotinyl-L-lysyl-[protein] + acetyl-CoA = N(6)-biotinyl-L-lysyl-[protein] + malonyl-CoA. It functions in the pathway lipid metabolism; malonyl-CoA biosynthesis; malonyl-CoA from acetyl-CoA: step 1/1. In terms of biological role, component of the acetyl coenzyme A carboxylase (ACC) complex. Biotin carboxylase (BC) catalyzes the carboxylation of biotin on its carrier protein (BCCP) and then the CO(2) group is transferred by the transcarboxylase to acetyl-CoA to form malonyl-CoA. The chain is Acetyl-coenzyme A carboxylase carboxyl transferase subunit beta, chloroplastic from Lactuca sativa (Garden lettuce).